The primary structure comprises 155 residues: Mediator of RNA polymerase II transcription subunit 10 (155 aa).

Residues 54 to 80 (SSHTQSHAPDADTAQANPSDPPISTIE) form a disordered region.

The protein belongs to the Mediator complex subunit 10 family. As to quaternary structure, component of the Mediator complex.

It localises to the nucleus. Functionally, component of the Mediator complex, a coactivator involved in the regulated transcription of nearly all RNA polymerase II-dependent genes. Mediator functions as a bridge to convey information from gene-specific regulatory proteins to the basal RNA polymerase II transcription machinery. Mediator is recruited to promoters by direct interactions with regulatory proteins and serves as a scaffold for the assembly of a functional preinitiation complex with RNA polymerase II and the general transcription factors. The protein is Mediator of RNA polymerase II transcription subunit 10 (nut2) of Aspergillus terreus (strain NIH 2624 / FGSC A1156).